A 397-amino-acid polypeptide reads, in one-letter code: Acetate kinase (397 aa).

N7 serves as a coordination point for Mg(2+). K14 is a binding site for ATP. R90 contacts substrate. D147 functions as the Proton donor/acceptor in the catalytic mechanism. ATP contacts are provided by residues H207–G211, D282–R284, and G330–N334. E383 contributes to the Mg(2+) binding site.

The protein belongs to the acetokinase family. As to quaternary structure, homodimer. Mg(2+) serves as cofactor. It depends on Mn(2+) as a cofactor.

The protein resides in the cytoplasm. The catalysed reaction is acetate + ATP = acetyl phosphate + ADP. It participates in metabolic intermediate biosynthesis; acetyl-CoA biosynthesis; acetyl-CoA from acetate: step 1/2. Catalyzes the formation of acetyl phosphate from acetate and ATP. Can also catalyze the reverse reaction. The polypeptide is Acetate kinase (Clostridium botulinum (strain 657 / Type Ba4)).